The sequence spans 428 residues: Enolase (428 aa).

Position 162 (Gln-162) interacts with (2R)-2-phosphoglycerate. Catalysis depends on Glu-204, which acts as the Proton donor. The Mg(2+) site is built by Asp-241, Glu-282, and Asp-309. Positions 334, 363, 364, and 385 each coordinate (2R)-2-phosphoglycerate. Catalysis depends on Lys-334, which acts as the Proton acceptor.

This sequence belongs to the enolase family. Requires Mg(2+) as cofactor.

It is found in the cytoplasm. The protein resides in the secreted. It localises to the cell surface. It carries out the reaction (2R)-2-phosphoglycerate = phosphoenolpyruvate + H2O. It participates in carbohydrate degradation; glycolysis; pyruvate from D-glyceraldehyde 3-phosphate: step 4/5. Functionally, catalyzes the reversible conversion of 2-phosphoglycerate (2-PG) into phosphoenolpyruvate (PEP). It is essential for the degradation of carbohydrates via glycolysis. In Mycobacterium marinum (strain ATCC BAA-535 / M), this protein is Enolase.